A 372-amino-acid polypeptide reads, in one-letter code: tRNA-specific 2-thiouridylase MnmA (372 aa).

ATP contacts are provided by residues glycine 11–serine 18 and methionine 37. The segment at asparagine 97–aspartate 99 is interaction with target base in tRNA. Cysteine 102 acts as the Nucleophile in catalysis. Cysteine 102 and cysteine 199 are joined by a disulfide. Residue glycine 126 coordinates ATP. The interaction with tRNA stretch occupies residues lysine 149–glutamine 151. Cysteine 199 serves as the catalytic Cysteine persulfide intermediate. Positions arginine 309–tyrosine 310 are interaction with tRNA.

The protein belongs to the MnmA/TRMU family.

Its subcellular location is the cytoplasm. The enzyme catalyses S-sulfanyl-L-cysteinyl-[protein] + uridine(34) in tRNA + AH2 + ATP = 2-thiouridine(34) in tRNA + L-cysteinyl-[protein] + A + AMP + diphosphate + H(+). Its function is as follows. Catalyzes the 2-thiolation of uridine at the wobble position (U34) of tRNA, leading to the formation of s(2)U34. This chain is tRNA-specific 2-thiouridylase MnmA, found in Staphylococcus aureus (strain Mu50 / ATCC 700699).